The sequence spans 350 residues: Secreted effector protein PipB2 (350 aa).

Pentapeptide repeat domains follow at residues 162 to 201 (ANLTAENLCDADLSGADLEGAILFMADCDGANFKGANLSG), 202 to 241 (ASLGDSNLTNACLEDSIMCGATLDRANLTGANLQHTSLLG), 247 to 286 (CNCSGANMDHANVSGSTLIRADMSGATLKGATIMAAIMEG), and 287 to 326 (AVLTRANLQKASFTATNLDGADLSEANLRNTSFKDCTLTD).

As to quaternary structure, interacts with the host kinesin light chain (KLC), a subunit of the kinesin-1 motor complex.

The protein localises to the secreted. Its subcellular location is the host membrane. In terms of biological role, effector proteins function to alter host cell physiology and promote bacterial survival in host tissues. Involved in the reorganization of late endosome/lysosome (LE/Lys) compartments in mammalian cells. Necessary and sufficient to link kinesin-1 onto the Salmonella-containing vacuole (SCV) membrane. Required for centrifugal extension of lysosomal glycoprotein-rich membrane tubules, known as Salmonella-induced filaments (Sifs), away from the SCV and toward the cell periphery. Required for virulence, but not for intracellular survival and replication in phagocytic cells. In Salmonella typhi, this protein is Secreted effector protein PipB2 (pipB2).